Here is a 56-residue protein sequence, read N- to C-terminus: Large ribosomal subunit protein bL32 (56 aa).

Belongs to the bacterial ribosomal protein bL32 family.

This Prochlorococcus marinus (strain MIT 9301) protein is Large ribosomal subunit protein bL32.